A 101-amino-acid chain; its full sequence is uncharacterized protein (101 aa).

2 helical membrane passes run 3–23 (IVYEYAISTNWIWLYVWLFLF) and 39–59 (AFLSLPPIVSFALSVATLIFF).

Its subcellular location is the membrane. This is an uncharacterized protein from Saccharomyces cerevisiae (strain ATCC 204508 / S288c) (Baker's yeast).